Here is a 1978-residue protein sequence, read N- to C-terminus: Sodium channel protein type 8 subunit alpha (1978 aa).

2 disordered regions span residues 1–20 (MAARVLAPPGPDSFKPFTPE) and 28–62 (RIAESKLKKPPKADGSHREDDEDSKPKPNSDLEAG). The Cytoplasmic segment spans residues 1–132 (MAARVLAPPG…RIAIKILIHS (132 aa)). Positions 28-61 (RIAESKLKKPPKADGSHREDDEDSKPKPNSDLEA) are enriched in basic and acidic residues. The stretch at 114 to 442 (ILSPFNLIRR…KAMLEQLKKQ (329 aa)) is one I repeat. Residues 133–151 (VFSMIIMCTILTNCVFMTF) traverse the membrane as a helical segment. The Extracellular portion of the chain corresponds to 152–158 (SNPPEWS). A helical transmembrane segment spans residues 159–179 (KNVEYTFTGIYTFESLVKIIA). The Cytoplasmic portion of the chain corresponds to 180–193 (RGFCIDGFTFLRDP). A helical transmembrane segment spans residues 194–211 (WNWLDFSVIMMAYVTEFV). The Extracellular segment spans residues 212–217 (DLGNVS). An N-linked (GlcNAc...) asparagine glycan is attached at N215. A helical membrane pass occupies residues 218 to 234 (ALRTFRVLRALKTISVI). The Cytoplasmic portion of the chain corresponds to 235–253 (PGLKTIVGALIQSVKKLSD). Residues 254–273 (VMILTVFCLSVFALIGLQLF) form a helical membrane-spanning segment. Residues 274–355 (MGNLRNKCVV…PNYGYTSFDT (82 aa)) lie on the Extracellular side of the membrane. C281 and C333 are disulfide-bonded. N-linked (GlcNAc...) asparagine glycosylation is found at N289, N295, N308, and N326. Residues 356–380 (FSWAFLALFRLMTQDYWENLYQLTL) constitute an intramembrane region (pore-forming). Residue E373 coordinates Na(+). The Extracellular segment spans residues 381-387 (RAAGKTY). A helical membrane pass occupies residues 388 to 408 (MIFFVLVIFVGSFYLVNLILA). Residues 409 to 751 (VVAMAYEEQN…EIVNLIVMDP (343 aa)) lie on the Cytoplasmic side of the membrane. Disordered stretches follow at residues 446–530 (AQAA…KAFR) and 576–597 (DPGSENEFADDEHSTVEESEGR). A compositionally biased stretch (low complexity) spans 473–486 (SPRSSSELSKLSSK). A compositionally biased stretch (basic residues) spans 489 to 500 (KERRNRRKKRKQ). Composition is skewed to basic and acidic residues over residues 501-530 (KELSEGEEKGDPEKVFKSESEDGMRRKAFR) and 586-597 (DEHSTVEESEGR). Residues S518 and S520 each carry the phosphoserine modification. Residues 733–1005 (CHPYWIKLKE…QISVIRIKKG (273 aa)) form an II repeat. Residues 752–770 (FVDLAITICIVLNTLFMAM) traverse the membrane as a helical segment. Residues 771–781 (EHHPMTPQFEH) lie on the Extracellular side of the membrane. A helical membrane pass occupies residues 782–801 (VLAVGNLVFTGIFTAEMFLK). At 802–815 (LIAMDPYYYFQEGW) the chain is on the cytoplasmic side. A helical membrane pass occupies residues 816-835 (NIFDGFIVSLSLMELGLADV). The Extracellular portion of the chain corresponds to 836 to 837 (EG). Residues 838 to 855 (LSVLRSFRLLRVFKLAKS) traverse the membrane as a helical segment. Topologically, residues 856-871 (WPTLNMLIKIIGNSVG) are cytoplasmic. Residues 872–890 (ALGNLTLVLAIIVFIFAVV) form a helical membrane-spanning segment. Topologically, residues 891–919 (GMQLFGKSYKECVCKISQECKLPRWHMND) are extracellular. C904 and C910 are joined by a disulfide. Positions 920–940 (FFHSFLIVFRVLCGEWIETMW) form an intramembrane region, pore-forming. Na(+)-binding residues include E934 and E937. At 941–953 (DCMEVAGQAMCLI) the chain is on the extracellular side. Cysteines 942 and 951 form a disulfide. Residues 954 to 974 (VFMMVMVIGNLVVLNLFLALL) form a helical membrane-spanning segment. Topologically, residues 975-1197 (LSSFSADNLA…TCFLIVEHNW (223 aa)) are cytoplasmic. Residues 1105-1146 (NLNTEDVSSESDPEGSKDKLDDTSSSEGSTIDIKPEVEEVPV) are disordered. The stretch at 1178 to 1493 (LGKSWWILRK…KKYYNAMKKL (316 aa)) is one III repeat. A helical transmembrane segment spans residues 1198-1215 (FETFIIFMILLSSGALAF). The Extracellular segment spans residues 1216–1228 (EDIYIEQRKTIRT). A helical transmembrane segment spans residues 1229–1247 (ILEYADKVFTYIFILEMLL). Topologically, residues 1248 to 1261 (KWTAYGFVKFFTNA) are cytoplasmic. Residues 1262-1280 (WCWLDFLIVAVSLVSLIAN) traverse the membrane as a helical segment. Topologically, residues 1281 to 1288 (ALGYSELG) are extracellular. A helical membrane pass occupies residues 1289 to 1307 (AIKSLRTLRALRPLRALSR). At 1308–1324 (FEGMRVVVNALVGAIPS) the chain is on the cytoplasmic side. Residues 1325-1344 (IMNVLLVCLIFWLIFSIMGV) traverse the membrane as a helical segment. Over 1345 to 1397 (NLFAGKYHYCFNETSEIRFEIDEVNNKTDCEKLMEGNNTEIRWKNVKINFDNV) the chain is Extracellular. A disulfide bridge links C1354 with C1374. N1356, N1370, and N1381 each carry an N-linked (GlcNAc...) asparagine glycan. The segment at residues 1398–1419 (GAGYLALLQVATFKGWMDIMYA) is an intramembrane region (pore-forming). The Extracellular segment spans residues 1420 to 1436 (AVDSRKPDEQPDYEGNI). A helical transmembrane segment spans residues 1437 to 1458 (YMYIYFVIFIIFGSFFTLNLFI). The Cytoplasmic portion of the chain corresponds to 1459-1521 (GVIIDNFNQQ…IVFDFVTQQA (63 aa)). At S1495 the chain carries Phosphoserine; by PKC. Residues 1502–1799 (IPRPLNKIQG…WEKFDPDATQ (298 aa)) form an IV repeat. Residues 1522 to 1539 (FDIVIMMLICLNMVTMMV) traverse the membrane as a helical segment. At 1540–1550 (ETDTQSKQMEN) the chain is on the extracellular side. The helical transmembrane segment at 1551–1569 (ILYWINLVFVIFFTCECVL) threads the bilayer. Residues 1570–1581 (KMFALRHYYFTI) are Cytoplasmic-facing. A helical transmembrane segment spans residues 1582–1599 (GWNIFDFVVVILSIVGMF). The Extracellular portion of the chain corresponds to 1600–1612 (LADIIEKYFVSPT). The helical transmembrane segment at 1613 to 1629 (LFRVIRLARIGRILRLI) threads the bilayer. The Cytoplasmic portion of the chain corresponds to 1630 to 1648 (KGAKGIRTLLFALMMSLPA). The helical transmembrane segment at 1649-1666 (LFNIGLLLFLVMFIFSIF) threads the bilayer. At 1667-1688 (GMSNFAYVKHEAGIDDMFNFET) the chain is on the extracellular side. Positions 1689 to 1711 (FGNSMICLFQITTSAGWDGLLLP) form an intramembrane region, pore-forming. The Extracellular segment spans residues 1712 to 1740 (ILNRPPDCSLDKEHPGSGFKGDCGNPSVG). The cysteines at positions 1719 and 1734 are disulfide-linked. A helical transmembrane segment spans residues 1741-1763 (IFFFVSYIIISFLIVVNMYIAII). Over 1764-1978 (LENFSVATEE…RQKEVRESKC (215 aa)) the chain is Cytoplasmic. An IQ domain is found at 1893–1922 (EEVSAVVLQRAYRGHLARRGFICRKITSNK). A disordered region spans residues 1924–1978 (ENGGTHREKKESTPSTASLPSYDSVTKPDKEKQQRAEEGRRERAKRQKEVRESKC). Positions 1936–1947 (TPSTASLPSYDS) are enriched in polar residues. The segment covering 1949–1978 (TKPDKEKQQRAEEGRRERAKRQKEVRESKC) has biased composition (basic and acidic residues).

It belongs to the sodium channel (TC 1.A.1.10) family. Nav1.6/SCN8A subfamily. In terms of assembly, the voltage-sensitive sodium channel consists of an ion-conducting pore-forming alpha subunit regulated by one or more beta-1 (SCN1B), beta-2 (SCN2B), beta-3 (SCN3B) and/or beta-4 (SCN4B) subunits. Beta-1 (SCN1B) and beta-3 (SCN3B) are non-covalently associated with alpha, while beta-2 (SCN2B) and beta-4 (SCN4B) are covalently linked by disulfide bonds. Interacts with FGF13. Interacts with NEDD4 and NEDD4L. Interacts with FGF14, GBG3, GBB2 and SCN1B. Interacts with TMEM233. Interacts with the conotoxin GVIIJ. Interacts with the scorpion toxin BMK M1. Interacts with CALM1; the interaction modulates the inactivation rate of SCN8A. May be ubiquitinated by NEDD4L; which would promote its endocytosis. In terms of processing, phosphorylation at Ser-1495 by PKC in a highly conserved cytoplasmic loop slows inactivation of the sodium channel and reduces peak sodium currents. As to expression, expressed in the hippocampus (at protein level). Expressed in brain, cerebellum and spinal cord. Expressed in non-neuronal tissues, such as monocytes/macrophages.

It localises to the cell membrane. The protein resides in the cell projection. The protein localises to the axon. Its subcellular location is the cytoplasmic vesicle. It is found in the podosome. The enzyme catalyses Na(+)(in) = Na(+)(out). Its function is as follows. Pore-forming subunit of a voltage-gated sodium channel complex assuming opened or closed conformations in response to the voltage difference across membranes and through which sodium ions selectively pass along their electrochemical gradient. Contributes to neuronal excitability by regulating action potential threshold and propagation. More specifically expressed in non-neuronal cells, could play a role in sodium release from intracellular compartments and participate in the control of podosomes formation and macrophages adhesion and movement. The sequence is that of Sodium channel protein type 8 subunit alpha from Mus musculus (Mouse).